Consider the following 388-residue polypeptide: Arginine biosynthesis bifunctional protein ArgJ (388 aa).

Residues threonine 150, lysine 172, threonine 183, glutamate 263, asparagine 383, and serine 388 each coordinate substrate. Threonine 183 acts as the Nucleophile in catalysis.

It belongs to the ArgJ family. As to quaternary structure, heterotetramer of two alpha and two beta chains.

The protein resides in the cytoplasm. The enzyme catalyses N(2)-acetyl-L-ornithine + L-glutamate = N-acetyl-L-glutamate + L-ornithine. It catalyses the reaction L-glutamate + acetyl-CoA = N-acetyl-L-glutamate + CoA + H(+). It functions in the pathway amino-acid biosynthesis; L-arginine biosynthesis; L-ornithine and N-acetyl-L-glutamate from L-glutamate and N(2)-acetyl-L-ornithine (cyclic): step 1/1. It participates in amino-acid biosynthesis; L-arginine biosynthesis; N(2)-acetyl-L-ornithine from L-glutamate: step 1/4. Its function is as follows. Catalyzes two activities which are involved in the cyclic version of arginine biosynthesis: the synthesis of N-acetylglutamate from glutamate and acetyl-CoA as the acetyl donor, and of ornithine by transacetylation between N(2)-acetylornithine and glutamate. This Corynebacterium glutamicum (strain ATCC 13032 / DSM 20300 / JCM 1318 / BCRC 11384 / CCUG 27702 / LMG 3730 / NBRC 12168 / NCIMB 10025 / NRRL B-2784 / 534) protein is Arginine biosynthesis bifunctional protein ArgJ.